The following is a 241-amino-acid chain: Ubiquinone biosynthesis O-methyltransferase (241 aa).

R44, G64, D85, and M129 together coordinate S-adenosyl-L-methionine.

It belongs to the methyltransferase superfamily. UbiG/COQ3 family.

It catalyses the reaction a 3-demethylubiquinol + S-adenosyl-L-methionine = a ubiquinol + S-adenosyl-L-homocysteine + H(+). The catalysed reaction is a 3-(all-trans-polyprenyl)benzene-1,2-diol + S-adenosyl-L-methionine = a 2-methoxy-6-(all-trans-polyprenyl)phenol + S-adenosyl-L-homocysteine + H(+). The protein operates within cofactor biosynthesis; ubiquinone biosynthesis. Functionally, O-methyltransferase that catalyzes the 2 O-methylation steps in the ubiquinone biosynthetic pathway. In Serratia proteamaculans (strain 568), this protein is Ubiquinone biosynthesis O-methyltransferase.